A 319-amino-acid chain; its full sequence is tRNA dimethylallyltransferase (319 aa).

Position 10–17 (10–17) interacts with ATP; it reads GPTAVGKT. Substrate is bound at residue 12 to 17; it reads TAVGKT. Residues 35–38 form an interaction with substrate tRNA region; sequence DSMQ.

This sequence belongs to the IPP transferase family. Monomer. Requires Mg(2+) as cofactor.

The enzyme catalyses adenosine(37) in tRNA + dimethylallyl diphosphate = N(6)-dimethylallyladenosine(37) in tRNA + diphosphate. Its function is as follows. Catalyzes the transfer of a dimethylallyl group onto the adenine at position 37 in tRNAs that read codons beginning with uridine, leading to the formation of N6-(dimethylallyl)adenosine (i(6)A). The polypeptide is tRNA dimethylallyltransferase (Symbiobacterium thermophilum (strain DSM 24528 / JCM 14929 / IAM 14863 / T)).